The following is a 360-amino-acid chain: A-type ATP synthase subunit C (360 aa).

The segment at 1–25 (MRLLEKLWGQKPSRKSDKKKNGTSN) is disordered.

This sequence belongs to the V-ATPase V0D/AC39 subunit family. As to quaternary structure, has multiple subunits with at least A(3), B(3), C, D, E, F, H, I and proteolipid K(x).

Its subcellular location is the cell membrane. Component of the A-type ATP synthase that produces ATP from ADP in the presence of a proton gradient across the membrane. This Methanosarcina barkeri (strain Fusaro / DSM 804) protein is A-type ATP synthase subunit C.